The following is a 454-amino-acid chain: Bifunctional protein GlmU (454 aa).

The pyrophosphorylase stretch occupies residues 1-228 (MSLKVIILAA…EMEVLGVNNK (228 aa)). UDP-N-acetyl-alpha-D-glucosamine-binding positions include 8–11 (LAAG), K22, Q73, 78–79 (GT), 100–102 (YGD), G138, E153, N168, and N226. D102 lines the Mg(2+) pocket. N226 contributes to the Mg(2+) binding site. Residues 229–249 (SQLQSLERQYQAQLAEELMEQ) are linker. The segment at 250 to 454 (GVTVLDASRI…IKGWQKPTKN (205 aa)) is N-acetyltransferase. The UDP-N-acetyl-alpha-D-glucosamine site is built by R332 and K350. H362 functions as the Proton acceptor in the catalytic mechanism. 2 residues coordinate UDP-N-acetyl-alpha-D-glucosamine: Y365 and N376. Residues A379, 385-386 (NY), S404, A422, and R439 each bind acetyl-CoA.

It in the N-terminal section; belongs to the N-acetylglucosamine-1-phosphate uridyltransferase family. The protein in the C-terminal section; belongs to the transferase hexapeptide repeat family. Homotrimer. Requires Mg(2+) as cofactor.

Its subcellular location is the cytoplasm. It carries out the reaction alpha-D-glucosamine 1-phosphate + acetyl-CoA = N-acetyl-alpha-D-glucosamine 1-phosphate + CoA + H(+). The enzyme catalyses N-acetyl-alpha-D-glucosamine 1-phosphate + UTP + H(+) = UDP-N-acetyl-alpha-D-glucosamine + diphosphate. Its pathway is nucleotide-sugar biosynthesis; UDP-N-acetyl-alpha-D-glucosamine biosynthesis; N-acetyl-alpha-D-glucosamine 1-phosphate from alpha-D-glucosamine 6-phosphate (route II): step 2/2. It participates in nucleotide-sugar biosynthesis; UDP-N-acetyl-alpha-D-glucosamine biosynthesis; UDP-N-acetyl-alpha-D-glucosamine from N-acetyl-alpha-D-glucosamine 1-phosphate: step 1/1. It functions in the pathway bacterial outer membrane biogenesis; LPS lipid A biosynthesis. Catalyzes the last two sequential reactions in the de novo biosynthetic pathway for UDP-N-acetylglucosamine (UDP-GlcNAc). The C-terminal domain catalyzes the transfer of acetyl group from acetyl coenzyme A to glucosamine-1-phosphate (GlcN-1-P) to produce N-acetylglucosamine-1-phosphate (GlcNAc-1-P), which is converted into UDP-GlcNAc by the transfer of uridine 5-monophosphate (from uridine 5-triphosphate), a reaction catalyzed by the N-terminal domain. This Hydrogenovibrio crunogenus (strain DSM 25203 / XCL-2) (Thiomicrospira crunogena) protein is Bifunctional protein GlmU.